The following is a 311-amino-acid chain: 2-dehydro-3-deoxygluconokinase (311 aa).

Residues 34-35, 106-108, and arginine 166 each bind substrate; these read GS and YYR. Residues 164–166, 224–229, 253–256, and serine 283 each bind ATP; these read NIR, KLGPKG, and GAGD. Substrate is bound by residues glycine 253 and aspartate 256. The Proton acceptor role is filled by aspartate 256. Residue aspartate 292 participates in substrate binding.

The protein belongs to the carbohydrate kinase PfkB family. In terms of assembly, homotetramer. A divalent metal cation serves as cofactor.

It catalyses the reaction 2-dehydro-3-deoxy-D-gluconate + ATP = 2-dehydro-3-deoxy-6-phospho-D-gluconate + ADP + H(+). It functions in the pathway carbohydrate acid metabolism; 2-dehydro-3-deoxy-D-gluconate degradation; D-glyceraldehyde 3-phosphate and pyruvate from 2-dehydro-3-deoxy-D-gluconate: step 1/2. Its function is as follows. Involved in the degradation of glucose via the semi-phosphorylative Entner-Doudoroff pathway. Catalyzes the phosphorylation of 2-keto-3-deoxygluconate (KDG) to produce 2-keto-3-deoxy-6-phosphogluconate (KDPG). Can also use GTP, but not ADP or AMP, as a phosphoryl donor and 2-keto-D-gluconate (KG) as a phosphoryl acceptor. In Sulfurisphaera tokodaii (strain DSM 16993 / JCM 10545 / NBRC 100140 / 7) (Sulfolobus tokodaii), this protein is 2-dehydro-3-deoxygluconokinase.